The sequence spans 138 residues: Small ribosomal subunit protein uS12 (138 aa).

The interval 33 to 55 is disordered; the sequence is KEHTNVSSPQKRGVCTRVGTMTP.

It belongs to the universal ribosomal protein uS12 family. Part of the 30S ribosomal subunit. Contacts proteins S8 and S17. May interact with IF1 in the 30S initiation complex. Interacts with BrxC.

Its function is as follows. With S4 and S5 plays an important role in translational accuracy. Functionally, interacts with and stabilizes bases of the 16S rRNA that are involved in tRNA selection in the A site and with the mRNA backbone. Located at the interface of the 30S and 50S subunits, it traverses the body of the 30S subunit contacting proteins on the other side and probably holding the rRNA structure together. The combined cluster of proteins S8, S12 and S17 appears to hold together the shoulder and platform of the 30S subunit. This is Small ribosomal subunit protein uS12 (rpsL) from Bacillus subtilis (strain 168).